The sequence spans 231 residues: Large ribosomal subunit protein uL1 (231 aa).

The protein belongs to the universal ribosomal protein uL1 family. As to quaternary structure, part of the 50S ribosomal subunit.

Its function is as follows. Binds directly to 23S rRNA. The L1 stalk is quite mobile in the ribosome, and is involved in E site tRNA release. Protein L1 is also a translational repressor protein, it controls the translation of the L11 operon by binding to its mRNA. This chain is Large ribosomal subunit protein uL1, found in Allorhizobium ampelinum (strain ATCC BAA-846 / DSM 112012 / S4) (Agrobacterium vitis (strain S4)).